Consider the following 372-residue polypeptide: Nickel transporter NicT (372 aa).

A run of 8 helical transmembrane segments spans residues 30-50 (LMFA…TLLV), 55-75 (LSLG…TLGL), 104-124 (VGFF…VMLV), 152-172 (ISGA…VGIV), 218-238 (VGFL…LVLA), 245-265 (GLPW…MCLL), 294-314 (VTGL…LGLI), and 335-355 (TVGF…LLVW).

Belongs to the NiCoT transporter (TC 2.A.52) family.

The protein resides in the cell membrane. It carries out the reaction Ni(2+)(in) = Ni(2+)(out). With respect to regulation, export of the fluoroquinolone antibiotic norfloxacin is inhibited by the proton ionophore carbonyl cyanide m-chlorophenylhydrazone (CCCP). Nickel may influence the extrusion of antibiotics possibly by facilitating the proton motive force-dependent efflux process. In terms of biological role, involved in nickel uptake. In addition, acts as a drug efflux pump and contributes to moderate tolerance towards different classes of antibiotics, including fluoroquinolones, aminoglycosides and the anti-TB drug isoniazid, with a preference for fluoroquinolones. The drug efflux function is probably dependent on proton motive force (pmf) or ion gradient, and might be facilitated by the presence of Ni(2+) ions. The protein is Nickel transporter NicT of Mycobacterium tuberculosis (strain ATCC 25618 / H37Rv).